We begin with the raw amino-acid sequence, 447 residues long: ATP-dependent protease ATPase subunit HslU (447 aa).

ATP contacts are provided by residues isoleucine 18, 60–65 (GVGKTE), aspartate 259, glutamate 325, and arginine 397.

Belongs to the ClpX chaperone family. HslU subfamily. As to quaternary structure, a double ring-shaped homohexamer of HslV is capped on each side by a ring-shaped HslU homohexamer. The assembly of the HslU/HslV complex is dependent on binding of ATP.

The protein resides in the cytoplasm. In terms of biological role, ATPase subunit of a proteasome-like degradation complex; this subunit has chaperone activity. The binding of ATP and its subsequent hydrolysis by HslU are essential for unfolding of protein substrates subsequently hydrolyzed by HslV. HslU recognizes the N-terminal part of its protein substrates and unfolds these before they are guided to HslV for hydrolysis. The protein is ATP-dependent protease ATPase subunit HslU of Burkholderia pseudomallei (strain 668).